A 105-amino-acid chain; its full sequence is uncharacterized protein (105 aa).

The ABM domain maps to 14–104; that stretch reads HYITACLKII…VEWLMKSNVN (91 aa).

This is an uncharacterized protein from Bacillus subtilis (strain 168).